A 203-amino-acid polypeptide reads, in one-letter code: Glycerol-3-phosphate acyltransferase (203 aa).

The next 5 membrane-spanning stretches (helical) occupy residues 6–26, 56–76, 82–102, 118–138, and 141–161; these read LTLA…AVLV, AAAM…YVAF, AVSL…PIFF, APIG…VVLI, and YSSL…WYFD.

The protein belongs to the PlsY family. As to quaternary structure, probably interacts with PlsX.

The protein localises to the cell inner membrane. It catalyses the reaction an acyl phosphate + sn-glycerol 3-phosphate = a 1-acyl-sn-glycero-3-phosphate + phosphate. It participates in lipid metabolism; phospholipid metabolism. Catalyzes the transfer of an acyl group from acyl-phosphate (acyl-PO(4)) to glycerol-3-phosphate (G3P) to form lysophosphatidic acid (LPA). This enzyme utilizes acyl-phosphate as fatty acyl donor, but not acyl-CoA or acyl-ACP. This chain is Glycerol-3-phosphate acyltransferase, found in Shewanella loihica (strain ATCC BAA-1088 / PV-4).